Reading from the N-terminus, the 754-residue chain is Endoribonuclease Dicer-like (754 aa).

In terms of domain architecture, PAZ spans Gln-132–Pro-251. RNase III domains lie at Phe-298–Asn-418 and Ala-613–Gly-734. Mn(2+) contacts are provided by Glu-336, Asp-404, Glu-407, Glu-649, Asp-720, and Glu-723.

Homodimer. It depends on Mg(2+) as a cofactor. Mn(2+) serves as cofactor.

Functionally, involved in cleaving double-stranded RNA in the RNA interference (RNAi) pathway. It produces 21 to 23 bp dsRNAs (siRNAs) which target the selective destruction of homologous RNAs. In Giardia intestinalis (strain ATCC 50803 / WB clone C6) (Giardia lamblia), this protein is Endoribonuclease Dicer-like.